Here is a 442-residue protein sequence, read N- to C-terminus: 3-ketoacyl-CoA thiolase (442 aa).

The active-site Acyl-thioester intermediate is cysteine 105. Active-site proton acceptor residues include histidine 398 and cysteine 428.

Belongs to the thiolase-like superfamily. Thiolase family. Heterotetramer of two alpha chains (FadJ) and two beta chains (FadI).

Its subcellular location is the cytoplasm. The catalysed reaction is an acyl-CoA + acetyl-CoA = a 3-oxoacyl-CoA + CoA. The protein operates within lipid metabolism; fatty acid beta-oxidation. Its function is as follows. Catalyzes the final step of fatty acid oxidation in which acetyl-CoA is released and the CoA ester of a fatty acid two carbons shorter is formed. This is 3-ketoacyl-CoA thiolase from Aliivibrio fischeri (strain MJ11) (Vibrio fischeri).